Consider the following 526-residue polypeptide: Peptide chain release factor 3 (526 aa).

Residues 9–277 enclose the tr-type G domain; sequence NKRRTFAIIS…DFVEYAPGPQ (269 aa). GTP contacts are provided by residues 18-25, 86-90, and 140-143; these read SHPDAGKT, DTPGH, and NKLD.

This sequence belongs to the TRAFAC class translation factor GTPase superfamily. Classic translation factor GTPase family. PrfC subfamily.

The protein localises to the cytoplasm. Increases the formation of ribosomal termination complexes and stimulates activities of RF-1 and RF-2. It binds guanine nucleotides and has strong preference for UGA stop codons. It may interact directly with the ribosome. The stimulation of RF-1 and RF-2 is significantly reduced by GTP and GDP, but not by GMP. The sequence is that of Peptide chain release factor 3 from Legionella pneumophila (strain Corby).